Reading from the N-terminus, the 88-residue chain is Small ribosomal subunit protein uS15 (88 aa).

It belongs to the universal ribosomal protein uS15 family. In terms of assembly, part of the 30S ribosomal subunit. Forms a bridge to the 50S subunit in the 70S ribosome, contacting the 23S rRNA.

In terms of biological role, one of the primary rRNA binding proteins, it binds directly to 16S rRNA where it helps nucleate assembly of the platform of the 30S subunit by binding and bridging several RNA helices of the 16S rRNA. Its function is as follows. Forms an intersubunit bridge (bridge B4) with the 23S rRNA of the 50S subunit in the ribosome. This is Small ribosomal subunit protein uS15 from Sorangium cellulosum (strain So ce56) (Polyangium cellulosum (strain So ce56)).